We begin with the raw amino-acid sequence, 341 residues long: Ketol-acid reductoisomerase (NADP(+)) (341 aa).

In terms of domain architecture, KARI N-terminal Rossmann spans 2 to 181 (AKVYYNGDAN…GAARAGVLET (180 aa)). Residues 25–28 (YGSQ), Arg48, Ser52, and 82–85 (DEKQ) contribute to the NADP(+) site. Residue His107 is part of the active site. Gly133 contributes to the NADP(+) binding site. Residues 182 to 327 (TFKEETETDL…RELRSMMPFV (146 aa)) enclose the KARI C-terminal knotted domain. Residues Asp190, Glu194, Glu226, and Glu230 each contribute to the Mg(2+) site. Ser251 lines the substrate pocket.

It belongs to the ketol-acid reductoisomerase family. It depends on Mg(2+) as a cofactor.

The catalysed reaction is (2R)-2,3-dihydroxy-3-methylbutanoate + NADP(+) = (2S)-2-acetolactate + NADPH + H(+). It carries out the reaction (2R,3R)-2,3-dihydroxy-3-methylpentanoate + NADP(+) = (S)-2-ethyl-2-hydroxy-3-oxobutanoate + NADPH + H(+). It participates in amino-acid biosynthesis; L-isoleucine biosynthesis; L-isoleucine from 2-oxobutanoate: step 2/4. The protein operates within amino-acid biosynthesis; L-valine biosynthesis; L-valine from pyruvate: step 2/4. Its function is as follows. Involved in the biosynthesis of branched-chain amino acids (BCAA). Catalyzes an alkyl-migration followed by a ketol-acid reduction of (S)-2-acetolactate (S2AL) to yield (R)-2,3-dihydroxy-isovalerate. In the isomerase reaction, S2AL is rearranged via a Mg-dependent methyl migration to produce 3-hydroxy-3-methyl-2-ketobutyrate (HMKB). In the reductase reaction, this 2-ketoacid undergoes a metal-dependent reduction by NADPH to yield (R)-2,3-dihydroxy-isovalerate. In Geobacillus thermodenitrificans (strain NG80-2), this protein is Ketol-acid reductoisomerase (NADP(+)).